A 672-amino-acid polypeptide reads, in one-letter code: DNA-directed RNA polymerase subunit gamma (672 aa).

The Zn(2+) site is built by Cys70, Cys72, Cys85, and Cys88. Mg(2+)-binding residues include Asp466, Asp468, and Asp470.

Belongs to the RNA polymerase beta' chain family. RpoC1 subfamily. In terms of assembly, in cyanobacteria the RNAP catalytic core is composed of 2 alpha, 1 beta, 1 beta', 1 gamma and 1 omega subunit. When a sigma factor is associated with the core the holoenzyme is formed, which can initiate transcription. Mg(2+) serves as cofactor. It depends on Zn(2+) as a cofactor.

The catalysed reaction is RNA(n) + a ribonucleoside 5'-triphosphate = RNA(n+1) + diphosphate. Its function is as follows. DNA-dependent RNA polymerase catalyzes the transcription of DNA into RNA using the four ribonucleoside triphosphates as substrates. The protein is DNA-directed RNA polymerase subunit gamma of Trichodesmium erythraeum (strain IMS101).